A 67-amino-acid chain; its full sequence is uncharacterized protein (67 aa).

The chain crosses the membrane as a helical span at residues 26–46 (CYLLFCFLECFLNLFKKCGVF).

This sequence belongs to the plectrovirus ORF11 family.

It localises to the host membrane. This is an uncharacterized protein from Spiroplasma virus SpV1-C74 (SpV1).